Consider the following 380-residue polypeptide: MTKPLRIGIVAGEISGDILGAGFIRAIKAQYPDAEFVGVAGPRMEAEGCKALFDMEELAVMGIVEVLGRLPRLLKVKAELVKYFTENPPDVFVGIDAPDFNLRLELDLKQHGIKTVHYVSPSVWAWRQKRIFKIEAATNLVLAFLPFEKAFYDKFNVPCEFVGHTMADAIPLETDKAAAQALLNLDGSKRWLAVLPGSRGSEMGMLAAPFIETCKLLKQKHPDLGFVVALVNEKRREQFQLAWQETAPELDFVLVNDTARNVMIASDAVLLASGTVALECMLVGRPMVVGYKVKPLTAWIIRRLVKTKYVSLANILADKPLVTELLQEDCVPEKLSAEVDRILSSDNTELLSEFSIMHQSIKCDADNRAAHAVLSLINKV.

Belongs to the LpxB family.

The catalysed reaction is a lipid X + a UDP-2-N,3-O-bis[(3R)-3-hydroxyacyl]-alpha-D-glucosamine = a lipid A disaccharide + UDP + H(+). It participates in bacterial outer membrane biogenesis; LPS lipid A biosynthesis. Condensation of UDP-2,3-diacylglucosamine and 2,3-diacylglucosamine-1-phosphate to form lipid A disaccharide, a precursor of lipid A, a phosphorylated glycolipid that anchors the lipopolysaccharide to the outer membrane of the cell. This Photobacterium profundum (strain SS9) protein is Lipid-A-disaccharide synthase.